Reading from the N-terminus, the 154-residue chain is Transcription antitermination protein NusB (154 aa).

The disordered stretch occupies residues 132 to 154; sequence KDKQSPQSTPLDDSDKDESDQTN. Residues 143–154 show a composition bias toward acidic residues; that stretch reads DDSDKDESDQTN.

Belongs to the NusB family.

In terms of biological role, involved in transcription antitermination. Required for transcription of ribosomal RNA (rRNA) genes. Binds specifically to the boxA antiterminator sequence of the ribosomal RNA (rrn) operons. The protein is Transcription antitermination protein NusB of Bifidobacterium animalis subsp. lactis (strain AD011).